A 244-amino-acid chain; its full sequence is Small ribosomal subunit protein eS4 (244 aa).

The 64-residue stretch at 43 to 106 (LPLLLVVRDV…DENYLVLFDE (64 aa)) folds into the S4 RNA-binding domain.

This sequence belongs to the eukaryotic ribosomal protein eS4 family.

This chain is Small ribosomal subunit protein eS4, found in Methanococcus maripaludis (strain C7 / ATCC BAA-1331).